The sequence spans 2243 residues: Zinc finger FYVE domain-containing protein 26 homolog (2243 aa).

Disordered regions lie at residues 386–416 and 514–556; these read SQRK…RPTA and KKKA…GKAS. Residues 393–408 are compositionally biased toward acidic residues; the sequence is GENDEEDDEQYVDDDV. Tyr403 bears the Phosphotyrosine mark. A compositionally biased stretch (basic and acidic residues) spans 517-528; the sequence is ASSDDESRERSN. Positions 534–543 are enriched in basic residues; the sequence is NRRKARRQRR. The LRR 1 repeat unit spans residues 617–644; it reads KKIIETFHLEHSQLNRELHFMEQQQLVK. Ser1424 carries the post-translational modification Phosphoserine. The FYVE-type zinc finger occupies 1444–1500; the sequence is DEEASHCMCCRRAAFTMLMRRHHCRRCGRVVCYACSTHRIRIPELYDELEVRICNDC. Zn(2+)-binding residues include Cys1450, Cys1453, Cys1467, Cys1470, Cys1475, Cys1478, Cys1497, and Cys1500. The disordered stretch occupies residues 1505 to 1534; it reads TPAKDQGDGTSSERSAISGQVSKSSGRSDS. The span at 1512 to 1534 shows a compositional bias: polar residues; the sequence is DGTSSERSAISGQVSKSSGRSDS. Residues 1887–1912 form an LRR 2 repeat; it reads YPQLANGGLNVLMDELQQLDDAQFTA.

Belongs to the ZFYVE26 family.

Its function is as follows. Phosphatidylinositol 3-phosphate (PtdIns[3]P)-binding protein. Involved in autophagy. The sequence is that of Zinc finger FYVE domain-containing protein 26 homolog from Drosophila melanogaster (Fruit fly).